Here is a 99-residue protein sequence, read N- to C-terminus: Nucleoid-associated protein LL0120 (99 aa).

This sequence belongs to the YbaB/EbfC family. Homodimer.

The protein resides in the cytoplasm. The protein localises to the nucleoid. In terms of biological role, binds to DNA and alters its conformation. May be involved in regulation of gene expression, nucleoid organization and DNA protection. This chain is Nucleoid-associated protein LL0120 (ybcG), found in Lactococcus lactis subsp. lactis (strain IL1403) (Streptococcus lactis).